We begin with the raw amino-acid sequence, 181 residues long: Protein Syd (181 aa).

It belongs to the Syd family.

The protein resides in the cell inner membrane. Functionally, interacts with the SecY protein in vivo. May bind preferentially to an uncomplexed state of SecY, thus functioning either as a chelating agent for excess SecY in the cell or as a regulatory factor that negatively controls the translocase function. This is Protein Syd from Shigella dysenteriae serotype 1 (strain Sd197).